A 406-amino-acid polypeptide reads, in one-letter code: Probable endo-xylogalacturonan hydrolase A (406 aa).

An N-terminal signal peptide occupies residues 1–18; that stretch reads MLYPRNLALFSLLSLSSA. PbH1 repeat units lie at residues 183–213, 214–235, 237–257, and 299–320; these read TQHVTFKNLRMDATSNSQNPPKNTDGFDIGA, STHVTISSVSVTNDDDCVAFKP, SNYVTVEDVTCTGSHGISVGS, and VKNVTFSDFNVRGCDYAFQIES. The Proton donor role is filled by D228. The active site involves H251. Residue N301 is glycosylated (N-linked (GlcNAc...) asparagine).

Belongs to the glycosyl hydrolase 28 family.

The protein localises to the secreted. Its function is as follows. Pectinolytic enzyme involved in the degradation of xylogalacturonan (xga), a galacturonan backbone heavily substituted with xylose, and which is one important component of the hairy regions of pectin. Activity requires a galacturonic acid backbone substituted with xylose. The polypeptide is Probable endo-xylogalacturonan hydrolase A (xghA) (Aspergillus fumigatus (strain CBS 144.89 / FGSC A1163 / CEA10) (Neosartorya fumigata)).